Here is a 311-residue protein sequence, read N- to C-terminus: Beta-ketoacyl-[acyl-carrier-protein] synthase III (311 aa).

Residues Cys-114 and His-238 contribute to the active site. The segment at 239 to 243 is ACP-binding; that stretch reads QANIR. The active site involves Asn-268.

It belongs to the thiolase-like superfamily. FabH family. As to quaternary structure, homodimer.

It localises to the cytoplasm. The catalysed reaction is malonyl-[ACP] + acetyl-CoA + H(+) = 3-oxobutanoyl-[ACP] + CO2 + CoA. It participates in lipid metabolism; fatty acid biosynthesis. Functionally, catalyzes the condensation reaction of fatty acid synthesis by the addition to an acyl acceptor of two carbons from malonyl-ACP. Catalyzes the first condensation reaction which initiates fatty acid synthesis and may therefore play a role in governing the total rate of fatty acid production. Possesses both acetoacetyl-ACP synthase and acetyl transacylase activities. Its substrate specificity determines the biosynthesis of branched-chain and/or straight-chain of fatty acids. The protein is Beta-ketoacyl-[acyl-carrier-protein] synthase III of Neorickettsia sennetsu (strain ATCC VR-367 / Miyayama) (Ehrlichia sennetsu).